The following is a 316-amino-acid chain: Delta(1)-pyrroline-2-carboxylate reductase (316 aa).

Belongs to the ornithine cyclodeaminase/mu-crystallin family. Homodimer.

It carries out the reaction L-proline + NAD(+) = 1-pyrroline-2-carboxylate + NADH + H(+). The catalysed reaction is L-proline + NADP(+) = 1-pyrroline-2-carboxylate + NADPH + H(+). In terms of biological role, catalyzes the reduction of Delta(1)-pyrroline-2-carboxylate (Pyr2C) to L-proline, using preferentially NADPH over NADH as the electron donor. Together with LhpH, is involved in a metabolic pathway that converts trans-3-hydroxy-L-proline (t3LHyp) to L-proline. To a much lesser extent, can also reduce Delta(1)-piperideine-2-carboxylate (Pip2C) to L-pipecolate in vitro; however, this activity has likely no physiological significance in vivo since C.psychrerythraea probably possesses no ability to metabolize D-lysine via the L-pipecolate pathway. Does not show ornithine cyclodeaminase (OCD) activity. The chain is Delta(1)-pyrroline-2-carboxylate reductase from Colwellia psychrerythraea (strain 34H / ATCC BAA-681) (Vibrio psychroerythus).